A 171-amino-acid chain; its full sequence is Lipoprotein signal peptidase (171 aa).

3 helical membrane-spanning segments follow: residues Ser-8–Val-28, Trp-64–Leu-84, and Ala-99–Val-119. Residues Asp-120 and Asp-138 contribute to the active site. Residues Val-133 to Phe-153 form a helical membrane-spanning segment.

This sequence belongs to the peptidase A8 family.

It localises to the cell inner membrane. It catalyses the reaction Release of signal peptides from bacterial membrane prolipoproteins. Hydrolyzes -Xaa-Yaa-Zaa-|-(S,diacylglyceryl)Cys-, in which Xaa is hydrophobic (preferably Leu), and Yaa (Ala or Ser) and Zaa (Gly or Ala) have small, neutral side chains.. Its pathway is protein modification; lipoprotein biosynthesis (signal peptide cleavage). This protein specifically catalyzes the removal of signal peptides from prolipoproteins. The chain is Lipoprotein signal peptidase from Haemophilus influenzae (strain PittGG).